Here is a 79-residue protein sequence, read N- to C-terminus: Acyl carrier protein (79 aa).

Positions 2–77 constitute a Carrier domain; sequence ESIEQRVKKI…QAVDYINSHG (76 aa). Residue Ser-37 is modified to O-(pantetheine 4'-phosphoryl)serine.

Belongs to the acyl carrier protein (ACP) family. 4'-phosphopantetheine is transferred from CoA to a specific serine of apo-ACP by AcpS. This modification is essential for activity because fatty acids are bound in thioester linkage to the sulfhydryl of the prosthetic group.

The protein resides in the cytoplasm. It functions in the pathway lipid metabolism; fatty acid biosynthesis. Its function is as follows. Carrier of the growing fatty acid chain in fatty acid biosynthesis. This Bordetella parapertussis (strain 12822 / ATCC BAA-587 / NCTC 13253) protein is Acyl carrier protein.